The sequence spans 380 residues: MANLRKTHPLLKIANDALVDLPAPSNISVWWNFGSLLGLCLAAQILTGLFLAMHYTSDIATAFSSVAHICRDVNYGWLIRSMHANGASFFFICIYLHIGRGLYYGSYLYKETWNIGVILLLLVMMTAFVGYVLPWGQMSFWGATVITNLLSAVPYIGNSLVQWIWGGFSVDNATLTRFFAFHFLFPFVIAAMTMIHLIFLHETGSTNPTGLNSDADKISFHPYFSYKDLLGFAILLIALITLALFSPNLLGDPDNFTPANPLVTPPHIKPEWYFLFAYAILRSIPNKLGGVLALLFSILILMLVPVLHTSKQRALTFRPFSQFLFWLLVANVAILTWIGGMPVEHPFIIIGQIASFLYFFIFLILVPTTGLLENKMLEWQ.

4 consecutive transmembrane segments (helical) span residues 33-53 (FGSLLGLCLAAQILTGLFLAM), 77-98 (WLIRSMHANGASFFFICIYLHI), 113-133 (WNIGVILLLLVMMTAFVGYVL), and 178-198 (FFAFHFLFPFVIAAMTMIHLI). Heme b contacts are provided by His83 and His97. Heme b contacts are provided by His182 and His196. His201 serves as a coordination point for a ubiquinone. 4 helical membrane-spanning segments follow: residues 226–246 (YKDLLGFAILLIALITLALFS), 288–308 (LGGVLALLFSILILMLVPVLH), 320–340 (FSQFLFWLLVANVAILTWIGG), and 347–367 (FIIIGQIASFLYFFIFLILVP).

The protein belongs to the cytochrome b family. The cytochrome bc1 complex contains 3 respiratory subunits (MT-CYB, CYC1 and UQCRFS1), 2 core proteins (UQCRC1 and UQCRC2) and probably 6 low-molecular weight proteins. Heme b is required as a cofactor.

It localises to the mitochondrion inner membrane. Its function is as follows. Component of the ubiquinol-cytochrome c reductase complex (complex III or cytochrome b-c1 complex) that is part of the mitochondrial respiratory chain. The b-c1 complex mediates electron transfer from ubiquinol to cytochrome c. Contributes to the generation of a proton gradient across the mitochondrial membrane that is then used for ATP synthesis. This Astronotus ocellatus (Oscar) protein is Cytochrome b (mt-cyb).